We begin with the raw amino-acid sequence, 309 residues long: MARCERLRGAALRDVLGQAQGVLFDCDGVLWNGERIVPGAPELLQRLAQAGKATLFVSNNSRRARPELALRFARLGFTGLRAEELFSSAVCAARLLRQRLPGPPDAPGAVFVLGGEGLRAELRAAGLRLAGDPGDDPRVRAVLVGYDEHFSFAKLTEACAHLRDPDCLLVATDRDPWHPLTDGSRTPGTGSLAAAVETASGRQALVVGKPSPYMFQCITEDFSVDPARMLMVGDRLETDILFGHRCGMTTVLTLTGVSSLEEAQAYLAAGQHDLVPHYYVESIADLMEGLGGLSPPPQFPDPVDGGYRP.

Catalysis depends on Asp25, which acts as the Nucleophile. Mg(2+) is bound by residues Asp25 and Asp27. Asp27 functions as the Proton donor in the catalytic mechanism. Substrate contacts are provided by residues 58–60, His178, and Lys209; that span reads SNN. Asp234 is a Mg(2+) binding site.

This sequence belongs to the HAD-like hydrolase superfamily. In terms of assembly, homodimer. Mg(2+) is required as a cofactor.

The protein resides in the cytoplasm. The protein localises to the cytosol. It is found in the cytoskeleton. Its subcellular location is the cell projection. It localises to the ruffle membrane. The protein resides in the lamellipodium membrane. The protein localises to the cell membrane. It carries out the reaction pyridoxal 5'-phosphate + H2O = pyridoxal + phosphate. It catalyses the reaction pyridoxine 5'-phosphate + H2O = pyridoxine + phosphate. The catalysed reaction is pyridoxamine + phosphate = pyridoxamine 5'-phosphate + H2O. The enzyme catalyses O-phospho-L-seryl-[protein] + H2O = L-seryl-[protein] + phosphate. In terms of biological role, functions as a pyridoxal phosphate (PLP) phosphatase, which also catalyzes the dephosphorylation of pyridoxine 5'-phosphate (PNP) and pyridoxamine 5'-phosphate (PMP), with order of substrate preference PLP &gt; PNP &gt; PMP and therefore plays a role in vitamin B6 metabolism. Also functions as a protein serine phosphatase that specifically dephosphorylates 'Ser-3' in proteins of the actin-depolymerizing factor (ADF)/cofilin family like CFL1 and DSTN. Thereby, regulates cofilin-dependent actin cytoskeleton reorganization, being required for normal progress through mitosis and normal cytokinesis. Does not dephosphorylate phosphothreonines in LIMK1. Does not dephosphorylate peptides containing phosphotyrosine. The polypeptide is Chronophin (Rattus norvegicus (Rat)).